Reading from the N-terminus, the 130-residue chain is Small ribosomal subunit protein uS9 (130 aa).

It belongs to the universal ribosomal protein uS9 family.

The polypeptide is Small ribosomal subunit protein uS9 (Lawsonia intracellularis (strain PHE/MN1-00)).